Reading from the N-terminus, the 266-residue chain is Chymotrypsin-like elastase family member 1 (266 aa).

The N-terminal stretch at M1–S16 is a signal peptide. Residues T17 to R26 constitute a propeptide, activation peptide. A Peptidase S1 domain is found at V27–A264. C56 and C72 are oxidised to a cystine. H71 serves as the catalytic Charge relay system. Residues D85, N87, Q90, and E95 each contribute to the Ca(2+) site. Catalysis depends on D119, which acts as the Charge relay system. Disulfide bonds link C153–C220, C184–C200, and C210–C240. The active-site Charge relay system is the S214.

Belongs to the peptidase S1 family. Elastase subfamily. Requires Ca(2+) as cofactor. In terms of tissue distribution, pancreas.

The protein resides in the secreted. The catalysed reaction is Hydrolysis of proteins, including elastin. Preferential cleavage: Ala-|-Xaa.. In terms of biological role, serine proteases that hydrolyze many proteins in addition to elastin. This Rattus norvegicus (Rat) protein is Chymotrypsin-like elastase family member 1 (Cela1).